Here is a 355-residue protein sequence, read N- to C-terminus: Galectin-9 (355 aa).

2 consecutive Galectin domains span residues 17 to 148 (FTGM…ISFQ) and 227 to 355 (FFTS…HVQT). Residues Asn48, His61, Arg65, Asn75, 82 to 88 (WGTEERK), His267, Arg271, Thr281, and 287 to 293 (WGSEERS) contribute to the a beta-D-galactoside site.

It localises to the cytoplasm. It is found in the nucleus. The protein localises to the secreted. Binds galactosides. Has high affinity for the Forssman pentasaccharide. Ligand for HAVCR2/TIM3. Binding to HAVCR2 induces T-helper type 1 lymphocyte (Th1) death. Also stimulates bactericidal activity in infected macrophages by causing macrophage activation and IL1B secretion which restricts intracellular bacterial growth. Ligand for P4HB; the interaction retains P4HB at the cell surface of Th2 T helper cells, increasing disulfide reductase activity at the plasma membrane, altering the plasma membrane redox state and enhancing cell migration. Ligand for CD44; the interaction enhances binding of SMAD3 to the FOXP3 promoter, leading to up-regulation of FOXP3 expression and increased induced regulatory T (iTreg) cell stability and suppressive function. Promotes ability of mesenchymal stromal cells to suppress T-cell proliferation. Expands regulatory T-cells and induces cytotoxic T-cell apoptosis following virus infection. Activates ERK1/2 phosphorylation inducing cytokine (IL-6, IL-8, IL-12) and chemokine (CCL2) production in mast and dendritic cells. Inhibits degranulation and induces apoptosis of mast cells. Induces maturation and migration of dendritic cells. Inhibits natural killer (NK) cell function. Can transform NK cell phenotype from peripheral to decidual during pregnancy. Astrocyte derived galectin-9 enhances microglial TNF production. May play a role in thymocyte-epithelial interactions relevant to the biology of the thymus. May provide the molecular basis for urate flux across cell membranes, allowing urate that is formed during purine metabolism to efflux from cells and serving as an electrogenic transporter that plays an important role in renal and gastrointestinal urate excretion. Highly selective to the anion urate. This is Galectin-9 (LGALS9) from Bos taurus (Bovine).